The primary structure comprises 125 residues: Large ribosomal subunit protein bL12 (125 aa).

This sequence belongs to the bacterial ribosomal protein bL12 family. Homodimer. Part of the ribosomal stalk of the 50S ribosomal subunit. Forms a multimeric L10(L12)X complex, where L10 forms an elongated spine to which 2 to 4 L12 dimers bind in a sequential fashion. Binds GTP-bound translation factors.

Forms part of the ribosomal stalk which helps the ribosome interact with GTP-bound translation factors. Is thus essential for accurate translation. The protein is Large ribosomal subunit protein bL12 of Azorhizobium caulinodans (strain ATCC 43989 / DSM 5975 / JCM 20966 / LMG 6465 / NBRC 14845 / NCIMB 13405 / ORS 571).